The sequence spans 333 residues: Ketol-acid reductoisomerase (NADP(+)) (333 aa).

The 181-residue stretch at 6-186 (TRVYTECDAD…GALRAGAIQT (181 aa)) folds into the KARI N-terminal Rossmann domain. Residues 29–32 (YGSQ), lysine 52, serine 55, serine 57, and 87–90 (DPAQ) contribute to the NADP(+) site. The active site involves histidine 112. NADP(+) is bound at residue glycine 138. A KARI C-terminal knotted domain is found at 187–332 (TFTEETETDL…ARLRALFSWS (146 aa)). Mg(2+) contacts are provided by aspartate 195, glutamate 199, glutamate 231, and glutamate 235. Serine 256 provides a ligand contact to substrate.

The protein belongs to the ketol-acid reductoisomerase family. Mg(2+) is required as a cofactor.

The enzyme catalyses (2R)-2,3-dihydroxy-3-methylbutanoate + NADP(+) = (2S)-2-acetolactate + NADPH + H(+). It carries out the reaction (2R,3R)-2,3-dihydroxy-3-methylpentanoate + NADP(+) = (S)-2-ethyl-2-hydroxy-3-oxobutanoate + NADPH + H(+). It participates in amino-acid biosynthesis; L-isoleucine biosynthesis; L-isoleucine from 2-oxobutanoate: step 2/4. The protein operates within amino-acid biosynthesis; L-valine biosynthesis; L-valine from pyruvate: step 2/4. Its function is as follows. Involved in the biosynthesis of branched-chain amino acids (BCAA). Catalyzes an alkyl-migration followed by a ketol-acid reduction of (S)-2-acetolactate (S2AL) to yield (R)-2,3-dihydroxy-isovalerate. In the isomerase reaction, S2AL is rearranged via a Mg-dependent methyl migration to produce 3-hydroxy-3-methyl-2-ketobutyrate (HMKB). In the reductase reaction, this 2-ketoacid undergoes a metal-dependent reduction by NADPH to yield (R)-2,3-dihydroxy-isovalerate. This Tropheryma whipplei (strain TW08/27) (Whipple's bacillus) protein is Ketol-acid reductoisomerase (NADP(+)).